The following is a 464-amino-acid chain: Peptidase inhibitor 16 (464 aa).

The first 27 residues, 1-27, serve as a signal peptide directing secretion; sequence MHGSGSLLACLLPPLLLLGAAPGPAGA. The SCP domain occupies 37–165; that stretch reads VELHNLYRTQ…TNIHLLVCNY (129 aa). N-linked (GlcNAc...) asparagine glycosylation is present at N114. Disordered stretches follow at residues 208–241, 260–281, 304–347, and 386–412; these read DLSSLVPEAPSSLATEASSSRREGIDSSLATEPP, VETKAPSSLVTEDSPSMATKTP, PATL…LMGT, and TTLKHKGHSSSKSLSNSPSASATANAV. Basic and acidic residues predominate over residues 311 to 325; sequence STHDPIPKSADKEAS. Low complexity predominate over residues 395-411; it reads SSKSLSNSPSASATANA.

The protein belongs to the CRISP family. As to quaternary structure, interacts with PSP94/MSMB. Post-translationally, N-glycosylated.

Its subcellular location is the secreted. May inhibit cardiomyocyte growth. The sequence is that of Peptidase inhibitor 16 (PI16) from Bos taurus (Bovine).